Reading from the N-terminus, the 543-residue chain is Serine/threonine-protein kinase Chk2 (543 aa).

The tract at residues 1–66 (MSRESDVEAQ…SGTLSSLETV (66 aa)) is disordered. The span at 8 to 22 (EAQQSHGSSACSQPH) shows a compositional bias: polar residues. Residues 23-62 (GSVTQSQGSSSQSQGISSSSTSTMPNSSQSSHSSSGTLSS) are compositionally biased toward low complexity. Ser-62 is modified (phosphoserine; by PLK3). Thr-68 carries the phosphothreonine; by ATM and MAP3K20 modification. At Ser-73 the chain carries Phosphoserine; by PLK3. The FHA domain occupies 113–175 (YWFGRDKSCE…NGTFVNTELV (63 aa)). In terms of domain architecture, Protein kinase spans 220–486 (YIMSKTLGSG…TEEALRHPWL (267 aa)). ATP contacts are provided by residues 227–234 (GSGACGEV), Lys-249, and 302–308 (ELMEGGE). The active-site Proton acceptor is Asp-347. ATP-binding positions include 351 to 352 (EN) and Asp-368. The tract at residues 368–394 (DFGHSKILGETSLMRTLCGTPTYLAPE) is T-loop/activation segment. Ser-379 bears the Phosphoserine; by autocatalysis mark. Thr-383 and Thr-387 each carry phosphothreonine; by autocatalysis. The residue at position 456 (Ser-456) is a Phosphoserine. The span at 506-517 (TALPQVLAQPST) shows a compositional bias: polar residues. Residues 506–538 (TALPQVLAQPSTSRKRPREGEAEGAETTKRPAV) form a disordered region. Over residues 523–534 (REGEAEGAETTK) the composition is skewed to basic and acidic residues.

Belongs to the protein kinase superfamily. CAMK Ser/Thr protein kinase family. CHK2 subfamily. Homodimer. Homodimerization is part of the activation process but the dimer may dissociate following activation. Interacts with PML. Interacts with TP53. Interacts with RB1; phosphorylates RB1. Interacts with BRCA1. Interacts (phosphorylated at Thr-68) with MDC1; requires ATM-mediated phosphorylation of CHEK2. Interacts with TP53BP1; modulates CHEK2 phosphorylation at Thr-68 in response to ionizing radiation. Interacts with CDC25A; phosphorylates CDC25A and mediates its degradation in response to ionizing radiation. Interacts with CUL1; mediates CHEK2 ubiquitination and regulation. Interacts with CDKN2AIP. Interacts (via protein kinase domain) with CCAR2 (via N-terminus). Interacts with SIRT1. It depends on Mg(2+) as a cofactor. In terms of processing, phosphorylated. Phosphorylated at Ser-73 by PLK3 in response to DNA damage, promoting phosphorylation at Thr-68 by ATM and the G2/M transition checkpoint. Phosphorylation at Thr-68 induces homodimerization. Autophosphorylates at Thr-383 and Thr-387 in the T-loop/activation segment upon dimerization to become fully active and phosphorylate its substrates like for instance CDC25C. DNA damage-induced autophosphorylation at Ser-379 induces CUL1-mediated ubiquitination and regulates the pro-apoptotic function. Phosphorylation at Ser-456 also regulates ubiquitination. Phosphorylated by PLK4. Ubiquitinated. CUL1-mediated ubiquitination regulates the pro-apoptotic function. Ubiquitination may also regulate protein stability. Ubiquitinated by RNF8 via 'Lys-48'-linked ubiquitination. As to expression, high expression is found in testis, spleen, colon and peripheral blood leukocytes. Low expression is found in other tissues.

It localises to the nucleus. Its subcellular location is the PML body. The protein resides in the nucleoplasm. The catalysed reaction is L-seryl-[protein] + ATP = O-phospho-L-seryl-[protein] + ADP + H(+). It catalyses the reaction L-threonyl-[protein] + ATP = O-phospho-L-threonyl-[protein] + ADP + H(+). Its activity is regulated as follows. Activated through phosphorylation at Thr-68 by ATM in response to DNA double-strand breaks. Activation is modulated by several mediators including MDC1 and TP53BP1. Induces homodimerization with exchange of the T-loop/activation segment between protomers and transphosphorylation of the protomers. The autophosphorylated kinase dimer is fully active. Negatively regulated by PPM1D through dephosphorylation of Thr-68. Its function is as follows. Serine/threonine-protein kinase which is required for checkpoint-mediated cell cycle arrest, activation of DNA repair and apoptosis in response to the presence of DNA double-strand breaks. May also negatively regulate cell cycle progression during unperturbed cell cycles. Following activation, phosphorylates numerous effectors preferentially at the consensus sequence [L-X-R-X-X-S/T]. Regulates cell cycle checkpoint arrest through phosphorylation of CDC25A, CDC25B and CDC25C, inhibiting their activity. Inhibition of CDC25 phosphatase activity leads to increased inhibitory tyrosine phosphorylation of CDK-cyclin complexes and blocks cell cycle progression. May also phosphorylate NEK6 which is involved in G2/M cell cycle arrest. Regulates DNA repair through phosphorylation of BRCA2, enhancing the association of RAD51 with chromatin which promotes DNA repair by homologous recombination. Also stimulates the transcription of genes involved in DNA repair (including BRCA2) through the phosphorylation and activation of the transcription factor FOXM1. Regulates apoptosis through the phosphorylation of p53/TP53, MDM4 and PML. Phosphorylation of p53/TP53 at 'Ser-20' by CHEK2 may alleviate inhibition by MDM2, leading to accumulation of active p53/TP53. Phosphorylation of MDM4 may also reduce degradation of p53/TP53. Also controls the transcription of pro-apoptotic genes through phosphorylation of the transcription factor E2F1. Tumor suppressor, it may also have a DNA damage-independent function in mitotic spindle assembly by phosphorylating BRCA1. Its absence may be a cause of the chromosomal instability observed in some cancer cells. Promotes the CCAR2-SIRT1 association and is required for CCAR2-mediated SIRT1 inhibition. Under oxidative stress, promotes ATG7 ubiquitination by phosphorylating the E3 ubiquitin ligase TRIM32 at 'Ser-55' leading to positive regulation of the autophagosme assembly. In terms of biological role, (Microbial infection) Phosphorylates herpes simplex virus 1/HHV-1 protein ICP0 and thus activates its SUMO-targeted ubiquitin ligase activity. In Homo sapiens (Human), this protein is Serine/threonine-protein kinase Chk2.